Consider the following 1508-residue polypeptide: Ras guanine nucleotide exchange factor Y (1508 aa).

Disordered regions lie at residues 1 to 73 (MIII…NNNE), 128 to 182 (KVLS…PKSV), 197 to 272 (IDNN…YSTS), 396 to 517 (ILQC…EDED), 565 to 593 (LSEN…SIPT), 606 to 727 (LPNI…AEPS), 831 to 1021 (NVII…SNKE), and 1153 to 1172 (TNED…TNKN). Composition is skewed to low complexity over residues 9–22 (NINN…NNNS) and 33–72 (NNNN…NNNN). Composition is skewed to polar residues over residues 128–150 (KVLS…TNTI) and 172–182 (DRTSQDIPKSV). Residues 199–216 (NNTTNNNSNNNNNSSLST) are compositionally biased toward low complexity. A compositionally biased stretch (basic and acidic residues) spans 223–232 (DSLETNPIKD). The span at 233–250 (EESEESEESEESKEEEEE) shows a compositional bias: acidic residues. Over residues 255–272 (IKTTKTTSETIESSYSTS) the composition is skewed to low complexity. Over residues 399–409 (CKDDSSSKDQD) the composition is skewed to basic and acidic residues. The span at 413-447 (NNSAGSSGNSSASNSNRNSIAFSSSNHFSSESSQS) shows a compositional bias: low complexity. Over residues 465-475 (PQSPSPSPSPP) the composition is skewed to pro residues. Polar residues predominate over residues 492–510 (FNQQTNFSVSPTKSPSNEK). Composition is skewed to low complexity over residues 574–593 (NQPS…SIPT), 606–660 (LPNI…LTES), 668–687 (NNNN…NNNN), 831–855 (NVII…NTVK), 862–891 (NKSS…SLTP), 942–984 (SLWS…SPPT), 993–1019 (ITTG…NNSN), and 1160–1172 (SNSN…TNKN). Residues 659-686 (ESLKTRIEENNNNNNNKNINNNNNNNNN) are a coiled coil. One can recognise an N-terminal Ras-GEF domain in the interval 1074-1234 (NRIKVRSASL…IILKIIDRKA (161 aa)). Positions 1278–1508 (DDLEIARQLT…LYKQSKIIEP (231 aa)) constitute a Ras-GEF domain.

Functionally, promotes the exchange of Ras-bound GDP by GTP. This is Ras guanine nucleotide exchange factor Y (gefY) from Dictyostelium discoideum (Social amoeba).